The following is a 363-amino-acid chain: Histidinol-phosphate aminotransferase (363 aa).

N6-(pyridoxal phosphate)lysine is present on K220.

It belongs to the class-II pyridoxal-phosphate-dependent aminotransferase family. Histidinol-phosphate aminotransferase subfamily. Homodimer. Pyridoxal 5'-phosphate is required as a cofactor.

It carries out the reaction L-histidinol phosphate + 2-oxoglutarate = 3-(imidazol-4-yl)-2-oxopropyl phosphate + L-glutamate. The protein operates within amino-acid biosynthesis; L-histidine biosynthesis; L-histidine from 5-phospho-alpha-D-ribose 1-diphosphate: step 7/9. The sequence is that of Histidinol-phosphate aminotransferase from Paramagnetospirillum magneticum (strain ATCC 700264 / AMB-1) (Magnetospirillum magneticum).